The primary structure comprises 428 residues: Histidine--tRNA ligase (428 aa).

The protein belongs to the class-II aminoacyl-tRNA synthetase family. As to quaternary structure, homodimer.

The protein resides in the cytoplasm. The catalysed reaction is tRNA(His) + L-histidine + ATP = L-histidyl-tRNA(His) + AMP + diphosphate + H(+). This Chlamydia trachomatis serovar A (strain ATCC VR-571B / DSM 19440 / HAR-13) protein is Histidine--tRNA ligase.